We begin with the raw amino-acid sequence, 323 residues long: Annexin A3 (323 aa).

Residue A2 is modified to N-acetylalanine. Annexin repeat units follow at residues 18-89 (FNPS…ALVT), 90-161 (PPAV…ILAN), 173-245 (QLAR…AIVR), and 249-320 (NTPA…KICG). Residue K177 is modified to N6-acetyllysine. Phosphothreonine is present on T267.

Belongs to the annexin family.

Functionally, inhibitor of phospholipase A2, also possesses anti-coagulant properties. Also cleaves the cyclic bond of inositol 1,2-cyclic phosphate to form inositol 1-phosphate. This is Annexin A3 (ANXA3) from Bos taurus (Bovine).